The sequence spans 398 residues: MASNDKGLEEIPEGQIESNYDEITDSFDSMELKPELLRGIYAYGFERPSAIQQRAILPIIKGNDVIAQAQSGTGKTATFSISALQKLDPNVKGCQALILAPTRELAQQIQKVVVAIGDFMNIECHACIGGTNVREDMKALQEGPQVVVGTPGRVQDMIQRRVLRTDNLKMFILDEADEMLSRGFTEQIYDIFQLLPQSTQVVLLSATMPQDVLEVTTKFMRDPVRILVKKQELTLEGIKQFYIAVEKEEWKLDTLSDLYETVTITQAVIFCNTRRKVDWLTDKLTARDFTVSAMHGDMEQAQRDVIMKEFRSGSSRVLIATDLLARGIDVQQVSLVINYDLPANRENYIHRIGRGGRFGRKGVAINFVTADDVRMMREIEQFYSTQIEEMPMNVADLI.

The short motif at 25–53 (DSFDSMELKPELLRGIYAYGFERPSAIQQ) is the Q motif element. Positions 56–226 (ILPIIKGNDV…TKFMRDPVRI (171 aa)) constitute a Helicase ATP-binding domain. 69 to 76 (AQSGTGKT) serves as a coordination point for ATP. The DEAD box motif lies at 174-177 (DEAD). The 162-residue stretch at 237–398 (GIKQFYIAVE…EMPMNVADLI (162 aa)) folds into the Helicase C-terminal domain.

The protein belongs to the DEAD box helicase family. eIF4A subfamily. In terms of assembly, component of the eIF4F complex, which composition varies with external and internal environmental conditions. It is composed of at least eIF4A, eIF4E and eIF4G.

It localises to the cytoplasm. The enzyme catalyses ATP + H2O = ADP + phosphate + H(+). Its function is as follows. ATP-dependent RNA helicase which is a subunit of the eIF4F complex involved in cap recognition and is required for mRNA binding to ribosome. In the current model of translation initiation, eIF4A unwinds RNA secondary structures in the 5'-UTR of mRNAs which is necessary to allow efficient binding of the small ribosomal subunit, and subsequent scanning for the initiator codon. This chain is ATP-dependent RNA helicase eIF4A (tif1), found in Neosartorya fischeri (strain ATCC 1020 / DSM 3700 / CBS 544.65 / FGSC A1164 / JCM 1740 / NRRL 181 / WB 181) (Aspergillus fischerianus).